A 102-amino-acid chain; its full sequence is Citrate lyase acyl carrier protein (102 aa).

Position 14 is an O-(phosphoribosyl dephospho-coenzyme A)serine (serine 14).

This sequence belongs to the CitD family. Oligomer with a subunit composition of (alpha,beta,gamma)6.

The protein resides in the cytoplasm. Functionally, covalent carrier of the coenzyme of citrate lyase. This Serratia proteamaculans (strain 568) protein is Citrate lyase acyl carrier protein.